Here is a 357-residue protein sequence, read N- to C-terminus: UDP-N-acetylglucosamine--N-acetylmuramyl-(pentapeptide) pyrophosphoryl-undecaprenol N-acetylglucosamine transferase (357 aa).

Residues 13–15 (SAG), Arg-166, Ser-196, and Gln-291 each bind UDP-N-acetyl-alpha-D-glucosamine.

It belongs to the glycosyltransferase 28 family. MurG subfamily.

It localises to the cell membrane. It catalyses the reaction di-trans,octa-cis-undecaprenyl diphospho-N-acetyl-alpha-D-muramoyl-L-alanyl-D-glutamyl-meso-2,6-diaminopimeloyl-D-alanyl-D-alanine + UDP-N-acetyl-alpha-D-glucosamine = di-trans,octa-cis-undecaprenyl diphospho-[N-acetyl-alpha-D-glucosaminyl-(1-&gt;4)]-N-acetyl-alpha-D-muramoyl-L-alanyl-D-glutamyl-meso-2,6-diaminopimeloyl-D-alanyl-D-alanine + UDP + H(+). It functions in the pathway cell wall biogenesis; peptidoglycan biosynthesis. Functionally, cell wall formation. Catalyzes the transfer of a GlcNAc subunit on undecaprenyl-pyrophosphoryl-MurNAc-pentapeptide (lipid intermediate I) to form undecaprenyl-pyrophosphoryl-MurNAc-(pentapeptide)GlcNAc (lipid intermediate II). The protein is UDP-N-acetylglucosamine--N-acetylmuramyl-(pentapeptide) pyrophosphoryl-undecaprenol N-acetylglucosamine transferase of Clostridium perfringens (strain SM101 / Type A).